We begin with the raw amino-acid sequence, 410 residues long: Lissencephaly-1 homolog (410 aa).

The region spanning 7-39 (QRDELNRAIADYLRSNGYEEAYSTFKKEAELDN) is the LisH domain. Positions 32-82 (KKEAELDNNEELDKKYAGLLEKKWTSVIRLQKKVMELESKLNEAKEEITLG) form a coiled coil. 7 WD repeats span residues 106–147 (GHRS…RTLK), 148–189 (GHTD…RTMH), 190–229 (GHDH…CVKT), 232–271 (GHRE…CKAE), 274–333 (EHEH…CLMT), 336–375 (GHDN…CMKT), and 378–410 (AHEH…WECR).

Belongs to the WD repeat LIS1/nudF family. Can self-associate. Component of the cytosolic PAF-AH (I) heterotetrameric enzyme, which is composed of PAFAH1B1 (beta), PAFAH1B2 (alpha2) and PAFAH1B3 (alpha1) subunits. The catalytic activity of the enzyme resides in the alpha1 (PAFAH1B3) and alpha2 (PAFAH1B2) subunits, whereas the beta subunit (PAFAH1B1) has regulatory activity. Trimer formation is not essential for the catalytic activity. Interacts with dynein, dynactin, nde1 and ndel1.

Its subcellular location is the cytoplasm. It is found in the cytoskeleton. The protein resides in the microtubule organizing center. The protein localises to the centrosome. In terms of biological role, regulatory subunit (beta subunit) of the cytosolic type I platelet-activating factor (PAF) acetylhydrolase (PAF-AH (I)), an enzyme that catalyzes the hydrolyze of the acetyl group at the sn-2 position of PAF and its analogs and participates in the PAF inactivation. Positively regulates the activity of the minus-end directed microtubule motor protein dynein. May enhance dynein-mediated microtubule sliding by targeting dynein to the microtubule plus end. Required for several dynein- and microtubule-dependent processes such as the maintenance of Golgi integrity, the peripheral transport of microtubule fragments and the coupling of the nucleus and centrosome. May be required for proliferation of neuronal precursors and neuronal migration. This is Lissencephaly-1 homolog (pafah1b1) from Tetraodon nigroviridis (Spotted green pufferfish).